A 103-amino-acid chain; its full sequence is Pyrimidine/purine nucleoside phosphorylase (103 aa).

This sequence belongs to the nucleoside phosphorylase PpnP family.

The enzyme catalyses a purine D-ribonucleoside + phosphate = a purine nucleobase + alpha-D-ribose 1-phosphate. It carries out the reaction adenosine + phosphate = alpha-D-ribose 1-phosphate + adenine. The catalysed reaction is cytidine + phosphate = cytosine + alpha-D-ribose 1-phosphate. It catalyses the reaction guanosine + phosphate = alpha-D-ribose 1-phosphate + guanine. The enzyme catalyses inosine + phosphate = alpha-D-ribose 1-phosphate + hypoxanthine. It carries out the reaction thymidine + phosphate = 2-deoxy-alpha-D-ribose 1-phosphate + thymine. The catalysed reaction is uridine + phosphate = alpha-D-ribose 1-phosphate + uracil. It catalyses the reaction xanthosine + phosphate = alpha-D-ribose 1-phosphate + xanthine. In terms of biological role, catalyzes the phosphorolysis of diverse nucleosides, yielding D-ribose 1-phosphate and the respective free bases. Can use uridine, adenosine, guanosine, cytidine, thymidine, inosine and xanthosine as substrates. Also catalyzes the reverse reactions. This is Pyrimidine/purine nucleoside phosphorylase from Shewanella putrefaciens (strain CN-32 / ATCC BAA-453).